A 434-amino-acid polypeptide reads, in one-letter code: Methylenetetrahydrofolate--tRNA-(uracil-5-)-methyltransferase TrmFO (434 aa).

10–15 contributes to the FAD binding site; it reads GAGLAG.

The protein belongs to the MnmG family. TrmFO subfamily. Requires FAD as cofactor.

The protein resides in the cytoplasm. The enzyme catalyses uridine(54) in tRNA + (6R)-5,10-methylene-5,6,7,8-tetrahydrofolate + NADH + H(+) = 5-methyluridine(54) in tRNA + (6S)-5,6,7,8-tetrahydrofolate + NAD(+). It catalyses the reaction uridine(54) in tRNA + (6R)-5,10-methylene-5,6,7,8-tetrahydrofolate + NADPH + H(+) = 5-methyluridine(54) in tRNA + (6S)-5,6,7,8-tetrahydrofolate + NADP(+). Functionally, catalyzes the folate-dependent formation of 5-methyl-uridine at position 54 (M-5-U54) in all tRNAs. The chain is Methylenetetrahydrofolate--tRNA-(uracil-5-)-methyltransferase TrmFO from Bacillus cereus (strain ATCC 14579 / DSM 31 / CCUG 7414 / JCM 2152 / NBRC 15305 / NCIMB 9373 / NCTC 2599 / NRRL B-3711).